Consider the following 512-residue polypeptide: Alpha-amylase (512 aa).

The first 15 residues, 1 to 15 (MKLFVLIALFGLGFA), serve as a signal peptide directing secretion. 3 cysteine pairs are disulfide-bonded: Cys-43/Cys-101, Cys-85/Cys-130, and Cys-156/Cys-175. Ca(2+)-binding residues include Asn-115, Arg-173, and Asp-182. Arg-210 is a binding site for chloride. The active-site Nucleophile is Asp-212. His-216 is a binding site for Ca(2+). Glu-248 serves as the catalytic Proton donor. Arg-352 is a binding site for chloride. Cystine bridges form between Cys-394–Cys-400 and Cys-466–Cys-478. Asn-496 is a glycosylation site (N-linked (GlcNAc...) asparagine).

The protein belongs to the glycosyl hydrolase 13 family. It depends on Ca(2+) as a cofactor. Requires chloride as cofactor.

It is found in the secreted. It catalyses the reaction Endohydrolysis of (1-&gt;4)-alpha-D-glucosidic linkages in polysaccharides containing three or more (1-&gt;4)-alpha-linked D-glucose units.. Catalyzes the hydrolysis of alpha-1,4 glycosidic linkages in starch, glycogen and similar oligosaccharides. The polypeptide is Alpha-amylase (Oryzias latipes (Japanese rice fish)).